Consider the following 338-residue polypeptide: Auxin-responsive protein IAA9 (338 aa).

The disordered stretch occupies residues 1–25; it reads MSPEEELQSNVSVASSSPTSNCISR. Over residues 9–21 the composition is skewed to low complexity; that stretch reads SNVSVASSSPTSN. The short motif at 68 to 72 is the EAR-like (transcriptional repression) element; the sequence is LTLGL. Residues 150–186 form a disordered region; sequence ATQSVTKKDVPQNIPKGQSSTTNNSSSPPAAKAQIVG. Over residues 168–180 the composition is skewed to low complexity; it reads SSTTNNSSSPPAA. The region spanning 216-318 is the PB1 domain; it reads ALFVKVSMDG…VCKKLKIMKG (103 aa).

It belongs to the Aux/IAA family. In terms of assembly, homodimers and heterodimers. Interacts with TPL. Phosphorylated by phytochrome A in vitro. As to expression, highly expressed in the whole plant.

It localises to the nucleus. Functionally, aux/IAA proteins are short-lived transcriptional factors that function as repressors of early auxin response genes at low auxin concentrations. Repression is thought to result from the interaction with auxin response factors (ARFs), proteins that bind to the auxin-responsive promoter element (AuxRE). Formation of heterodimers with ARF proteins may alter their ability to modulate early auxin response genes expression. The protein is Auxin-responsive protein IAA9 (IAA9) of Arabidopsis thaliana (Mouse-ear cress).